Reading from the N-terminus, the 874-residue chain is Alanine--tRNA ligase (874 aa).

Positions 563, 567, 665, and 669 each coordinate Zn(2+).

The protein belongs to the class-II aminoacyl-tRNA synthetase family. The cofactor is Zn(2+).

Its subcellular location is the cytoplasm. The catalysed reaction is tRNA(Ala) + L-alanine + ATP = L-alanyl-tRNA(Ala) + AMP + diphosphate. Functionally, catalyzes the attachment of alanine to tRNA(Ala) in a two-step reaction: alanine is first activated by ATP to form Ala-AMP and then transferred to the acceptor end of tRNA(Ala). Also edits incorrectly charged Ser-tRNA(Ala) and Gly-tRNA(Ala) via its editing domain. This is Alanine--tRNA ligase from Haemophilus ducreyi (strain 35000HP / ATCC 700724).